The sequence spans 421 residues: Hydrolyase poxO (421 aa).

Ser239 acts as the Nucleophile in catalysis.

Belongs to the AB hydrolase superfamily. FUS2 hydrolase family. As to quaternary structure, homodimer.

The protein operates within secondary metabolite biosynthesis. Hydrolyase; part of the gene cluster that mediates the biosynthesis of oxaleimides, cytotoxic compounds containing an unusual disubstituted succinimide moiety. The first step of the pathway is provided by the HR-PKS poxF that serves in a new mode of collaborative biosynthesis with the PKS-NRPS poxE, by providing the olefin containing amino acid substrate via the synthesis of an ACP-bound dec-4-enoate. The cytochrome P450 monooxygenase poxM-catalyzed oxidation at the alpha-position creates the enzyme-bound 2-hydroxydec-4-enoyl-ACP thioester, which may be prone to spontaneous hydrolysis to yield 2-hydroxydec-4-enoic acid due to increased electrophilicity of the carbonyl. 2-hydroxydec-4-enoic acid can then be further oxidized by poxM to yield the alpha-ketoacid 2-oxodec-4-enoicacid, which is reductively aminated by the aminotransferase poxL to yield (S,E)-2-aminodec-4-enoic acid. The Hybrid PKS-NRPS synthetase poxE then performs condensation between the octaketide product of its PKS modules and the amino group of (S,E)-2-aminodec-4-enoic acid which is activated and incorporated by the adenylation domain. The resulting aminoacyl product can be cyclized by the Diels-Alderase PoxQ and reductively released by the reductive (R) domain of poxE to yield an aldehyde intermediate. The released aldehyde is then substrate for a Knoevenagel condensation by the hydrolyase poxO followed by an oxidation at the 5-position of the pyrrolidone ring. The presence of the olefin from the amino acid building block allows for migration of the substituted allyl group to occur. This allylic transposition reaction takes place in a conjugate addition, semipinacol-like fashion to yield a succinimide intermediate. Iterative two-electron oxidations of the C7 methyl of the succinimide intermediate to the carboxylic acid can be catalyzed by one of two remaining cytochrome P450 monooxygenasess poxC or poxD to yield oxaleimide A. Subsequent oxidation yields the maleimide scaffold oxaleimide I. Both oxaleimide A and oxaleimide I can undergo oxidative modifications in the decalin ring to yield the series of products oxaleimides B to H. This is Hydrolyase poxO from Penicillium oxalicum (strain 114-2 / CGMCC 5302) (Penicillium decumbens).